Here is a 528-residue protein sequence, read N- to C-terminus: Succinate-semialdehyde dehydrogenase, mitochondrial (528 aa).

A mitochondrion-targeting transit peptide spans 1-34 (MVIGAAARVAIGGCRKLISSHTSLLLVSSQCRQM). 196–198 (TPW) provides a ligand contact to NAD(+). Residue arginine 207 coordinates substrate. Residues 222-225 (KPSE), 275-280 (GSTAVG), and glutamate 297 each bind NAD(+). The active-site Proton acceptor is glutamate 297. Arginine 325 is a substrate binding site. The Nucleophile role is filled by cysteine 331. Cysteines 331 and 333 form a disulfide. NAD(+) is bound at residue 428-430 (EIF). Serine 488 lines the substrate pocket.

The protein belongs to the aldehyde dehydrogenase family. Homotetramer. In terms of tissue distribution, expressed in developing leaf tissues.

It localises to the mitochondrion matrix. The enzyme catalyses succinate semialdehyde + NAD(+) + H2O = succinate + NADH + 2 H(+). It participates in amino-acid degradation; 4-aminobutanoate degradation. Competitive inhibition by NADH. Inhibited by ATP, ADP and AMP. Redox-regulated. Inhibited under oxydizing conditions. In terms of biological role, oxidizes specifically succinate semialdehyde. Involved in plant response to environmental stress by preventing the accumulation of reactive oxygen species, probably by regulating proline, gamma-hydroxybutyrate (GHB) and gamma-aminobutyrate (GABA) levels. Required for the maintenance of the shoot apical meristem (SAM) structure and subsequent adaxial-abaxial axis-dependent development of cotyledons and leaves. The polypeptide is Succinate-semialdehyde dehydrogenase, mitochondrial (Arabidopsis thaliana (Mouse-ear cress)).